The chain runs to 256 residues: Pyrroloquinoline-quinone synthase (256 aa).

It belongs to the PqqC family.

The enzyme catalyses 6-(2-amino-2-carboxyethyl)-7,8-dioxo-1,2,3,4,7,8-hexahydroquinoline-2,4-dicarboxylate + 3 O2 = pyrroloquinoline quinone + 2 H2O2 + 2 H2O + H(+). Its pathway is cofactor biosynthesis; pyrroloquinoline quinone biosynthesis. Its function is as follows. Ring cyclization and eight-electron oxidation of 3a-(2-amino-2-carboxyethyl)-4,5-dioxo-4,5,6,7,8,9-hexahydroquinoline-7,9-dicarboxylic-acid to PQQ. The protein is Pyrroloquinoline-quinone synthase of Rhizobium meliloti (strain 1021) (Ensifer meliloti).